A 384-amino-acid polypeptide reads, in one-letter code: Dual-specificity RNA methyltransferase RlmN (384 aa).

Glutamate 105 acts as the Proton acceptor in catalysis. One can recognise a Radical SAM core domain in the interval 111–350 (EDDRATLCVS…TIVRKTRGDD (240 aa)). Cysteine 118 and cysteine 355 are joined by a disulfide. Residues cysteine 125, cysteine 129, and cysteine 132 each contribute to the [4Fe-4S] cluster site. Residues 179–180 (GE), serine 211, 233–235 (SLH), and asparagine 312 contribute to the S-adenosyl-L-methionine site. Residue cysteine 355 is the S-methylcysteine intermediate of the active site.

The protein belongs to the radical SAM superfamily. RlmN family. [4Fe-4S] cluster is required as a cofactor.

The protein resides in the cytoplasm. It catalyses the reaction adenosine(2503) in 23S rRNA + 2 reduced [2Fe-2S]-[ferredoxin] + 2 S-adenosyl-L-methionine = 2-methyladenosine(2503) in 23S rRNA + 5'-deoxyadenosine + L-methionine + 2 oxidized [2Fe-2S]-[ferredoxin] + S-adenosyl-L-homocysteine. The enzyme catalyses adenosine(37) in tRNA + 2 reduced [2Fe-2S]-[ferredoxin] + 2 S-adenosyl-L-methionine = 2-methyladenosine(37) in tRNA + 5'-deoxyadenosine + L-methionine + 2 oxidized [2Fe-2S]-[ferredoxin] + S-adenosyl-L-homocysteine. Functionally, specifically methylates position 2 of adenine 2503 in 23S rRNA and position 2 of adenine 37 in tRNAs. m2A2503 modification seems to play a crucial role in the proofreading step occurring at the peptidyl transferase center and thus would serve to optimize ribosomal fidelity. This Shigella flexneri serotype 5b (strain 8401) protein is Dual-specificity RNA methyltransferase RlmN.